Consider the following 333-residue polypeptide: Chlorophyllide reductase 35.5 kDa chain (333 aa).

Positions 1–17 (MTDAPELKAFDQRLRDE) are enriched in basic and acidic residues. The interval 1–30 (MTDAPELKAFDQRLRDEAAEEPTLEVPQGE) is disordered. ATP contacts are provided by residues 45–50 (GIGKSF) and K74. S49 is a Mg(2+) binding site. [4Fe-4S] cluster-binding residues include C130 and C165. 219–220 (NK) serves as a coordination point for ATP.

Belongs to the NifH/BchL/ChlL family. As to quaternary structure, homodimer. Chlorophyllide reductase is composed of three subunits; BchX, BchY and BchZ. The cofactor is [4Fe-4S] cluster.

It carries out the reaction 3-deacetyl-3-vinylbacteriochlorophyllide a + 2 oxidized [2Fe-2S]-[ferredoxin] + ADP + phosphate = chlorophyllide a + 2 reduced [2Fe-2S]-[ferredoxin] + ATP + H2O + H(+). It catalyses the reaction bacteriochlorophyllide a + 2 oxidized [2Fe-2S]-[ferredoxin] + ADP + phosphate = 3-acetyl-3-devinylchlorophyllide a + 2 reduced [2Fe-2S]-[ferredoxin] + ATP + H2O + H(+). The catalysed reaction is 3-deacetyl-3-(1-hydroxyethyl)bacteriochlorophyllide a + 2 oxidized [2Fe-2S]-[ferredoxin] + ADP + phosphate = 3-devinyl-3-(1-hydroxyethyl)chlorophyllide a + 2 reduced [2Fe-2S]-[ferredoxin] + ATP + H2O + H(+). It functions in the pathway porphyrin-containing compound metabolism; bacteriochlorophyll biosynthesis. Its function is as follows. Converts chlorophylls (Chl) into bacteriochlorophylls (BChl) by reducing ring B of the tetrapyrrole. The protein is Chlorophyllide reductase 35.5 kDa chain (bchX) of Cereibacter sphaeroides (strain ATCC 17023 / DSM 158 / JCM 6121 / CCUG 31486 / LMG 2827 / NBRC 12203 / NCIMB 8253 / ATH 2.4.1.) (Rhodobacter sphaeroides).